A 1483-amino-acid polypeptide reads, in one-letter code: Heme-responsive zinc finger transcription factor HAP1 (1483 aa).

The span at 1 to 50 (MSNTPYNSSVPSIASMTQSSVSRSPNMHTATTPGANTSSNSPPLHMSSDS) shows a compositional bias: polar residues. Residues 1–56 (MSNTPYNSSVPSIASMTQSSVSRSPNMHTATTPGANTSSNSPPLHMSSDSSKIKRK) are disordered. The Zn(2+) site is built by cysteine 64, cysteine 67, cysteine 74, cysteine 81, cysteine 84, and cysteine 93. Residues 64 to 93 (CTICRKRKVKCDKLRPHCQQCTKTGVAHLC) constitute a DNA-binding region (zn(2)-C6 fungal-type). The stretch at 105 to 134 (EKELLKDNELKKLRERVKSLEKTLSKVHSS) forms a coiled coil. Residues 162 to 176 (VNANTGSASSASHMH) show a composition bias toward polar residues. The disordered stretch occupies residues 162–208 (VNANTGSASSASHMHQQQQQQQQQEQQQDFSRSANANANSSSLSISN). Residues 177-208 (QQQQQQQQQEQQQDFSRSANANANSSSLSISN) show a composition bias toward low complexity. The interval 244 to 444 (KGDPYLKLLW…NTIPHHQPQS (201 aa)) is heme-responsive; required for HMC formation. HRM repeat units lie at residues 280–285 (KCPINH), 299–304 (KCPVDH), 323–328 (KCPVDH), 347–352 (RCPVDH), 389–394 (KCPVDH), and 415–420 (RCPIDH). 2 stretches are compositionally biased toward polar residues: residues 432–447 (STHN…SGSH) and 706–734 (QLNA…NPTL). Disordered stretches follow at residues 432 to 458 (STHN…NRKH) and 706 to 767 (QLNA…KENQ). Low complexity predominate over residues 735-759 (NNNMSAATTNSSSRSGSADSRSGSN). The HRM 7 repeat unit spans residues 1192 to 1197 (KCPVYQ). Residues 1384–1411 (TANTDTSANGSALSTLTSPQGSDLASNS) form a disordered region. Polar residues predominate over residues 1388-1411 (DTSANGSALSTLTSPQGSDLASNS).

As to quaternary structure, binds DNA as a homodimer. Interacts with SRO9 and YDJ1. In the absence of heme, binds to at least four cellular proteins, including YDJ1 and SRO9, forming a high-molecular-weight complex (HMC) which results in repression of its activity and dictates its DNA-binding specificity.

Its subcellular location is the nucleus. Functionally, regulation of oxygen dependent gene expression. It modulates the expression of Iso-1 (CYP1) and Iso-2 (CYP3) cytochrome c. In response to heme, promotes transcription of genes encoding functions required for respiration, controlling oxidative damage and repression of anaerobic genes. Binds to the sequence 5'-CGGNNNTNNCGG-3'. In Saccharomyces cerevisiae (strain RM11-1a) (Baker's yeast), this protein is Heme-responsive zinc finger transcription factor HAP1 (HAP1).